The primary structure comprises 313 residues: Phosphoenolpyruvate phosphomutase (313 aa).

Positions 1-23 (MNATERPGSDGTGSPESVGSRLK) are disordered. Asp69 acts as the Nucleophile in catalysis.

Belongs to the isocitrate lyase/PEP mutase superfamily. PEP mutase family.

It carries out the reaction phosphoenolpyruvate + H(+) = 3-phosphonopyruvate. Its pathway is secondary metabolite biosynthesis; bialaphos biosynthesis. Formation of a carbon-phosphorus bond by converting phosphoenolpyruvate (PEP) to phosphonopyruvate (P-Pyr). The sequence is that of Phosphoenolpyruvate phosphomutase (ppm) from Streptomyces viridochromogenes (strain DSM 40736 / JCM 4977 / BCRC 1201 / Tue 494).